A 630-amino-acid chain; its full sequence is Putative F-box/LRR-repeat protein At3g49150 (630 aa).

The 49-residue stretch at 15-63 (KDIISDLPEALICHILSFLPIEDSALTSVLSKKWQHLFAFRPNLEFDDA) folds into the F-box domain. 9 LRR repeats span residues 101-129 (CRDF…DLRC), 152-178 (RIET…YLNK), 180-205 (LLRH…FIMN), 228-253 (CEDV…VYHD), 300-325 (ISNV…QIPV), 337-362 (DQKA…IFDG), 406-436 (CDDY…KLFY), 437-465 (DTQI…FNAR), and 567-590 (DSSI…GLNW).

The sequence is that of Putative F-box/LRR-repeat protein At3g49150 from Arabidopsis thaliana (Mouse-ear cress).